The primary structure comprises 141 residues: Lutropin subunit beta (141 aa).

A signal peptide spans 1-20; that stretch reads MEMLQGLLLLMLLSMGGTWA. Disulfide bonds link cysteine 29/cysteine 77, cysteine 43/cysteine 92, cysteine 46/cysteine 130, cysteine 54/cysteine 108, cysteine 58/cysteine 110, and cysteine 113/cysteine 120. N-linked (GlcNAc...) asparagine glycosylation is found at asparagine 33 and asparagine 50.

This sequence belongs to the glycoprotein hormones subunit beta family. As to quaternary structure, heterodimer of a common alpha chain and a unique beta chain which confers biological specificity to thyrotropin, lutropin, follitropin and gonadotropin.

The protein localises to the secreted. Promotes spermatogenesis and ovulation by stimulating the testes and ovaries to synthesize steroids. This Pongo pygmaeus (Bornean orangutan) protein is Lutropin subunit beta (LHB).